The following is a 281-amino-acid chain: 2,3,4,5-tetrahydropyridine-2,6-dicarboxylate N-succinyltransferase (281 aa).

Substrate-binding residues include Arg108 and Asp145.

The protein belongs to the transferase hexapeptide repeat family. In terms of assembly, homotrimer.

The protein localises to the cytoplasm. It carries out the reaction (S)-2,3,4,5-tetrahydrodipicolinate + succinyl-CoA + H2O = (S)-2-succinylamino-6-oxoheptanedioate + CoA. It participates in amino-acid biosynthesis; L-lysine biosynthesis via DAP pathway; LL-2,6-diaminopimelate from (S)-tetrahydrodipicolinate (succinylase route): step 1/3. This chain is 2,3,4,5-tetrahydropyridine-2,6-dicarboxylate N-succinyltransferase, found in Methylobacterium nodulans (strain LMG 21967 / CNCM I-2342 / ORS 2060).